The chain runs to 735 residues: Glutamine-dependent NAD(+) synthetase (735 aa).

A CN hydrolase domain is found at 4-274 (LRVATCNLNQ…VEVLDALVDL (271 aa)). Residue Glu44 is the Proton acceptor; for glutaminase activity of the active site. Catalysis depends on Lys113, which acts as the For glutaminase activity. The active-site Nucleophile; for glutaminase activity is Cys174. A ligase region spans residues 324 to 711 (YHRPEEEIAF…STEGELRRRK (388 aa)). 354–361 (PLSGGADS) is a binding site for ATP. Ser356 is a catalytic residue.

It in the C-terminal section; belongs to the NAD synthetase family.

It carries out the reaction deamido-NAD(+) + L-glutamine + ATP + H2O = L-glutamate + AMP + diphosphate + NAD(+) + H(+). It participates in cofactor biosynthesis; NAD(+) biosynthesis; NAD(+) from deamido-NAD(+) (L-Gln route): step 1/1. The sequence is that of Glutamine-dependent NAD(+) synthetase from Oryza sativa subsp. indica (Rice).